Reading from the N-terminus, the 420-residue chain is UDP-N-acetylglucosamine 1-carboxyvinyltransferase (420 aa).

Residue K22–N23 participates in phosphoenolpyruvate binding. R92 contributes to the UDP-N-acetyl-alpha-D-glucosamine binding site. C116 acts as the Proton donor in catalysis. C116 is subject to 2-(S-cysteinyl)pyruvic acid O-phosphothioketal. UDP-N-acetyl-alpha-D-glucosamine-binding positions include R121–Q125, D304, and I326.

Belongs to the EPSP synthase family. MurA subfamily.

Its subcellular location is the cytoplasm. The catalysed reaction is phosphoenolpyruvate + UDP-N-acetyl-alpha-D-glucosamine = UDP-N-acetyl-3-O-(1-carboxyvinyl)-alpha-D-glucosamine + phosphate. It functions in the pathway cell wall biogenesis; peptidoglycan biosynthesis. In terms of biological role, cell wall formation. Adds enolpyruvyl to UDP-N-acetylglucosamine. The chain is UDP-N-acetylglucosamine 1-carboxyvinyltransferase from Paraburkholderia phymatum (strain DSM 17167 / CIP 108236 / LMG 21445 / STM815) (Burkholderia phymatum).